A 150-amino-acid chain; its full sequence is Large ribosomal subunit protein uL11 (150 aa).

The segment at 83-111 is disordered; that stretch reads AAGLKPQGKRNRAKGSEKPGRQTAGTVTA.

The protein belongs to the universal ribosomal protein uL11 family. As to quaternary structure, part of the ribosomal stalk of the 50S ribosomal subunit. Interacts with L10 and the large rRNA to form the base of the stalk. L10 forms an elongated spine to which L12 dimers bind in a sequential fashion forming a multimeric L10(L12)X complex. One or more lysine residues are methylated.

Functionally, forms part of the ribosomal stalk which helps the ribosome interact with GTP-bound translation factors. This Paracoccus denitrificans (strain Pd 1222) protein is Large ribosomal subunit protein uL11.